A 317-amino-acid polypeptide reads, in one-letter code: MNPESRVIRKVLALQNDEKIFSGERRVLIAFSGGVDSVVLTDVLLKLKNYFSLKEVALAHFNHMLRESAERDEEFCKEFAKERNMKIFVGKEDVRAFAKENRMSLEEAGRFLRYKFLKEILESEGFDCIATAHHLNDLLETSLLFFTRGTGLDGLIGFLPKEEVIRRPLYYVKRSEIEEYAKFKGLRWVEDETNYEVSIPRNRIRHRVIPELKRINENLEDTFLKMVKVLRAEREFLEEEAQKLYKEVKKGNCLDVKKLKEKPLALQRRVIRKFIGEKDYEKVELVRSLLEKGGEVNLGKGKVLKRKERWLCFSPEV.

32–37 is an ATP binding site; that stretch reads SGGVDS.

Belongs to the tRNA(Ile)-lysidine synthase family.

Its subcellular location is the cytoplasm. It carries out the reaction cytidine(34) in tRNA(Ile2) + L-lysine + ATP = lysidine(34) in tRNA(Ile2) + AMP + diphosphate + H(+). Its function is as follows. Ligates lysine onto the cytidine present at position 34 of the AUA codon-specific tRNA(Ile) that contains the anticodon CAU, in an ATP-dependent manner. Cytidine is converted to lysidine, thus changing the amino acid specificity of the tRNA from methionine to isoleucine. The sequence is that of tRNA(Ile)-lysidine synthase from Aquifex aeolicus (strain VF5).